A 307-amino-acid polypeptide reads, in one-letter code: Glycerol-3-phosphate dehydrogenase [NAD(P)+] (307 aa).

NADPH contacts are provided by W14, R34, R35, and K82. Sn-glycerol 3-phosphate is bound by residues K82 and G110. Residue S114 participates in NADPH binding. Residues K165, D218, S228, R229, and N230 each contribute to the sn-glycerol 3-phosphate site. The active-site Proton acceptor is K165. R229 provides a ligand contact to NADPH. Residue E255 participates in NADPH binding.

This sequence belongs to the NAD-dependent glycerol-3-phosphate dehydrogenase family.

The protein resides in the cytoplasm. The enzyme catalyses sn-glycerol 3-phosphate + NAD(+) = dihydroxyacetone phosphate + NADH + H(+). It carries out the reaction sn-glycerol 3-phosphate + NADP(+) = dihydroxyacetone phosphate + NADPH + H(+). It participates in membrane lipid metabolism; glycerophospholipid metabolism. Functionally, catalyzes the reduction of the glycolytic intermediate dihydroxyacetone phosphate (DHAP) to sn-glycerol 3-phosphate (G3P), the key precursor for phospholipid synthesis. The sequence is that of Glycerol-3-phosphate dehydrogenase [NAD(P)+] from Trichormus variabilis (strain ATCC 29413 / PCC 7937) (Anabaena variabilis).